We begin with the raw amino-acid sequence, 112 residues long: Large ribosomal subunit protein uL22 (112 aa).

It belongs to the universal ribosomal protein uL22 family. In terms of assembly, part of the 50S ribosomal subunit.

This protein binds specifically to 23S rRNA; its binding is stimulated by other ribosomal proteins, e.g. L4, L17, and L20. It is important during the early stages of 50S assembly. It makes multiple contacts with different domains of the 23S rRNA in the assembled 50S subunit and ribosome. In terms of biological role, the globular domain of the protein is located near the polypeptide exit tunnel on the outside of the subunit, while an extended beta-hairpin is found that lines the wall of the exit tunnel in the center of the 70S ribosome. The protein is Large ribosomal subunit protein uL22 of Akkermansia muciniphila (strain ATCC BAA-835 / DSM 22959 / JCM 33894 / BCRC 81048 / CCUG 64013 / CIP 107961 / Muc).